The chain runs to 284 residues: 2-dehydro-3-deoxyphosphooctonate aldolase (284 aa).

This sequence belongs to the KdsA family.

Its subcellular location is the cytoplasm. The enzyme catalyses D-arabinose 5-phosphate + phosphoenolpyruvate + H2O = 3-deoxy-alpha-D-manno-2-octulosonate-8-phosphate + phosphate. It functions in the pathway carbohydrate biosynthesis; 3-deoxy-D-manno-octulosonate biosynthesis; 3-deoxy-D-manno-octulosonate from D-ribulose 5-phosphate: step 2/3. The protein operates within bacterial outer membrane biogenesis; lipopolysaccharide biosynthesis. This chain is 2-dehydro-3-deoxyphosphooctonate aldolase, found in Synechococcus sp. (strain ATCC 27144 / PCC 6301 / SAUG 1402/1) (Anacystis nidulans).